The sequence spans 438 residues: Methylenetetrahydrofolate--tRNA-(uracil-5-)-methyltransferase TrmFO 2 (438 aa).

9-14 contacts FAD; that stretch reads GAGLAG.

Belongs to the MnmG family. TrmFO subfamily. Requires FAD as cofactor.

The protein localises to the cytoplasm. The catalysed reaction is uridine(54) in tRNA + (6R)-5,10-methylene-5,6,7,8-tetrahydrofolate + NADH + H(+) = 5-methyluridine(54) in tRNA + (6S)-5,6,7,8-tetrahydrofolate + NAD(+). The enzyme catalyses uridine(54) in tRNA + (6R)-5,10-methylene-5,6,7,8-tetrahydrofolate + NADPH + H(+) = 5-methyluridine(54) in tRNA + (6S)-5,6,7,8-tetrahydrofolate + NADP(+). Its function is as follows. Catalyzes the folate-dependent formation of 5-methyl-uridine at position 54 (M-5-U54) in all tRNAs. This is Methylenetetrahydrofolate--tRNA-(uracil-5-)-methyltransferase TrmFO 2 from Mycoplasma mycoides subsp. mycoides SC (strain CCUG 32753 / NCTC 10114 / PG1).